Here is a 572-residue protein sequence, read N- to C-terminus: Methionine--tRNA ligase (572 aa).

The 'HIGH' region signature appears at 11–21 (PYINGVKHLGN). Cysteine 143, cysteine 146, cysteine 156, and cysteine 159 together coordinate Zn(2+). The short motif at 341–345 (KFSTS) is the 'KMSKS' region element. Residue threonine 344 participates in ATP binding.

This sequence belongs to the class-I aminoacyl-tRNA synthetase family. MetG type 1 subfamily. As to quaternary structure, monomer. The cofactor is Zn(2+).

It localises to the cytoplasm. It carries out the reaction tRNA(Met) + L-methionine + ATP = L-methionyl-tRNA(Met) + AMP + diphosphate. Its function is as follows. Is required not only for elongation of protein synthesis but also for the initiation of all mRNA translation through initiator tRNA(fMet) aminoacylation. This is Methionine--tRNA ligase from Maricaulis maris (strain MCS10) (Caulobacter maris).